A 369-amino-acid chain; its full sequence is MLKPSLPFTSLLFLQLPLLGVGLNTTILTPNGNEDTTADFFLTTMPTDSLSVSTLPLPEVQCFVFNVEYMNCTWNSSSEPQPTNLTLHYWYKNSDNDKVQKCSHYLFSEEITSGCQLQKKEIHLYQTFVVQLQDPREPRRQATQMLKLQNLVIPWAPENLTLHKLSESQLELNWNNRFLNHCLEHLVQYRTDWDHSWTEQSVDYRHKFSLPSVDGQKRYTFRVRSRFNPLCGSAQHWSEWSHPIHWGSNTSKENPFLFALEAVVISVGSMGLIISLLCVYFWLERTMPRIPTLKNLEDLVTEYHGNFSAWSGVSKGLAESLQPDYSERLCLVSEIPPKGGALGEGPGASPCNQHSPYWAPPCYTLKPET.

A signal peptide spans 1-22 (MLKPSLPFTSLLFLQLPLLGVG). The Extracellular portion of the chain corresponds to 23-262 (LNTTILTPNG…ENPFLFALEA (240 aa)). N24, N71, N75, and N84 each carry an N-linked (GlcNAc...) asparagine glycan. A disulfide bridge connects residues C62 and C72. C102 and C115 are oxidised to a cystine. The Fibronectin type-III domain occupies 156-253 (APENLTLHKL…IHWGSNTSKE (98 aa)). An N-linked (GlcNAc...) asparagine glycan is attached at N159. Cysteines 182 and 231 form a disulfide. A WSXWS motif motif is present at residues 237-241 (WSEWS). N-linked (GlcNAc...) asparagine glycosylation is present at N249. Residues 263-283 (VVISVGSMGLIISLLCVYFWL) form a helical membrane-spanning segment. The Cytoplasmic portion of the chain corresponds to 284–369 (ERTMPRIPTL…PPCYTLKPET (86 aa)). The Box 1 motif motif lies at 286 to 294 (TMPRIPTLK). The residue at position 292 (T292) is a Phosphothreonine.

The protein belongs to the type I cytokine receptor family. Type 5 subfamily. In terms of assembly, the gamma subunit is common to the IL2, IL4, IL7, IL15, IL21 and probably also the IL13 receptors. Interacts with SHB upon interleukin stimulation. Interacts with IL9. As to quaternary structure, (Microbial infection) Interacts with HTLV-1 accessory protein p12I.

It is found in the cell membrane. It localises to the cell surface. In terms of biological role, common subunit for the receptors for a variety of interleukins. Probably in association with IL15RA, involved in the stimulation of neutrophil phagocytosis by IL15. The chain is Cytokine receptor common subunit gamma (IL2RG) from Homo sapiens (Human).